The primary structure comprises 854 residues: Golgin subfamily A member 6-like protein 22 (854 aa).

Disordered regions lie at residues 1 to 114, 320 to 348, 366 to 447, 481 to 568, 581 to 681, and 714 to 854; these read MLMW…HQEA, QEEKIREQEEKMRRQEEMMWEKEEKMRRQ, MHEQ…MWRQ, QEEK…MWRQ, RQEE…EQEE, and QEEK…MQEH. A compositionally biased stretch (basic residues) spans 15 to 35; it reads LPTHPHLPTHPHLPTHPHLPT. The segment covering 45-66 has biased composition (basic and acidic residues); sequence MSKETRQSKLAEAKEQLTDHHP. Polar residues-rich tracts occupy residues 67–77 and 85–97; these read QTNPSVGTAAS and NNGTSPETTTSGG. Residues 100–114 show a composition bias toward basic and acidic residues; sequence SPEDEQKASHQHQEA. Positions 103–854 form a coiled coil; the sequence is DEQKASHQHQ…RQQEEKMQEH (752 aa).

The protein belongs to the GOLGA6 family.

This chain is Golgin subfamily A member 6-like protein 22, found in Homo sapiens (Human).